A 783-amino-acid polypeptide reads, in one-letter code: Isoamylase 1, chloroplastic (783 aa).

Residues 1–43 (MDAIKCSSSFLHHTKLNTLFSNHTFPKISAPNFKPLFRPISIS) constitute a chloroplast transit peptide. The Nucleophile role is filled by Asp-410. The active-site Proton donor is Glu-466.

Belongs to the glycosyl hydrolase 13 family. As to quaternary structure, associates with ISA2 to form the heteromultimeric complex Iso1 required for amylopectin synthesis.

The protein localises to the plastid. The protein resides in the chloroplast. The catalysed reaction is Hydrolysis of (1-&gt;6)-alpha-D-glucosidic branch linkages in glycogen, amylopectin and their beta-limit dextrins.. It participates in glycan biosynthesis; starch biosynthesis. Functionally, involved in the trimming of pre-amylopectin chains. Accelerates the crystallization of nascent amylopectin molecules during starch synthesis. ISA1 and ISA2 work exclusively together as a multimeric holoenzyme. ISA1-ISA2 removes preferentially branches that are very close to other branches. Promotes negative gravitropic responses in shoots by facilitating starch granules (statoliths) formation in hypocotyls. The chain is Isoamylase 1, chloroplastic from Arabidopsis thaliana (Mouse-ear cress).